We begin with the raw amino-acid sequence, 208 residues long: MKTRIKICGLTREEDVDAAVAAGADAIGFVFYPPSPRYVSPQRAAELVKRIPPFVDVVGLFVNEAPEVVRIACEALPINVLQFHGDEDAAYCSQFARPYLRAARVRPGLDLVEFAGSFPDARGLLLDAFVEGYGGGGHVFDWTLIPPNLPSYLVLSGGLTADNVGDAVRRVRPVAVDISSGVEASKGIKDHSKIAAFVAAVRKADESI.

The protein belongs to the TrpF family.

The enzyme catalyses N-(5-phospho-beta-D-ribosyl)anthranilate = 1-(2-carboxyphenylamino)-1-deoxy-D-ribulose 5-phosphate. It participates in amino-acid biosynthesis; L-tryptophan biosynthesis; L-tryptophan from chorismate: step 3/5. The chain is N-(5'-phosphoribosyl)anthranilate isomerase from Dechloromonas aromatica (strain RCB).